The chain runs to 161 residues: Cytidylate kinase (161 aa).

An ATP-binding site is contributed by 7-15; the sequence is GLAGTGTTT.

It belongs to the cytidylate kinase family. Type 2 subfamily.

The protein resides in the cytoplasm. The enzyme catalyses CMP + ATP = CDP + ADP. It carries out the reaction dCMP + ATP = dCDP + ADP. This is Cytidylate kinase (cmk) from Methanothermobacter thermautotrophicus (strain ATCC 29096 / DSM 1053 / JCM 10044 / NBRC 100330 / Delta H) (Methanobacterium thermoautotrophicum).